The following is an 80-amino-acid chain: Large ribosomal subunit protein eL13 (80 aa).

The protein belongs to the eukaryotic ribosomal protein eL13 family.

The chain is Large ribosomal subunit protein eL13 from Aeropyrum pernix (strain ATCC 700893 / DSM 11879 / JCM 9820 / NBRC 100138 / K1).